We begin with the raw amino-acid sequence, 297 residues long: N-acetylmuramic acid 6-phosphate etherase (297 aa).

The SIS domain occupies 55 to 218 (ITKHFKQGGR…STGAMVGIGK (164 aa)). E83 acts as the Proton donor in catalysis. E114 is a catalytic residue.

This sequence belongs to the GCKR-like family. MurNAc-6-P etherase subfamily. In terms of assembly, homodimer.

It carries out the reaction N-acetyl-D-muramate 6-phosphate + H2O = N-acetyl-D-glucosamine 6-phosphate + (R)-lactate. It participates in amino-sugar metabolism; N-acetylmuramate degradation. In terms of biological role, specifically catalyzes the cleavage of the D-lactyl ether substituent of MurNAc 6-phosphate, producing GlcNAc 6-phosphate and D-lactate. The sequence is that of N-acetylmuramic acid 6-phosphate etherase from Oenococcus oeni (strain ATCC BAA-331 / PSU-1).